A 209-amino-acid polypeptide reads, in one-letter code: Uracil phosphoribosyltransferase (209 aa).

5-phospho-alpha-D-ribose 1-diphosphate is bound by residues R79, R104, and 131 to 139 (DPMLATGGS). Uracil is bound by residues I194 and 199–201 (GDA). D200 serves as a coordination point for 5-phospho-alpha-D-ribose 1-diphosphate.

Belongs to the UPRTase family. Mg(2+) serves as cofactor.

It carries out the reaction UMP + diphosphate = 5-phospho-alpha-D-ribose 1-diphosphate + uracil. It participates in pyrimidine metabolism; UMP biosynthesis via salvage pathway; UMP from uracil: step 1/1. Allosterically activated by GTP. In terms of biological role, catalyzes the conversion of uracil and 5-phospho-alpha-D-ribose 1-diphosphate (PRPP) to UMP and diphosphate. The polypeptide is Uracil phosphoribosyltransferase (Streptococcus mutans serotype c (strain ATCC 700610 / UA159)).